A 369-amino-acid chain; its full sequence is Phospho-N-acetylmuramoyl-pentapeptide-transferase (369 aa).

10 helical membrane-spanning segments follow: residues 30–50 (AAAI…IGYL), 73–93 (LPTM…LLWA), 99–119 (YVWL…IDDY), 140–160 (VSLG…SVLL), 171–191 (LMID…TAVS), 202–222 (GLAA…AYLT), 239–259 (GGEV…FLWF), 266–286 (IFMG…IALL), 291–311 (LLLP…SLQV), and 346–366 (KIVI…LMTL).

This sequence belongs to the glycosyltransferase 4 family. MraY subfamily. Requires Mg(2+) as cofactor.

Its subcellular location is the cell inner membrane. It catalyses the reaction UDP-N-acetyl-alpha-D-muramoyl-L-alanyl-gamma-D-glutamyl-meso-2,6-diaminopimeloyl-D-alanyl-D-alanine + di-trans,octa-cis-undecaprenyl phosphate = di-trans,octa-cis-undecaprenyl diphospho-N-acetyl-alpha-D-muramoyl-L-alanyl-D-glutamyl-meso-2,6-diaminopimeloyl-D-alanyl-D-alanine + UMP. The protein operates within cell wall biogenesis; peptidoglycan biosynthesis. Catalyzes the initial step of the lipid cycle reactions in the biosynthesis of the cell wall peptidoglycan: transfers peptidoglycan precursor phospho-MurNAc-pentapeptide from UDP-MurNAc-pentapeptide onto the lipid carrier undecaprenyl phosphate, yielding undecaprenyl-pyrophosphoryl-MurNAc-pentapeptide, known as lipid I. This Chlorobium phaeobacteroides (strain BS1) protein is Phospho-N-acetylmuramoyl-pentapeptide-transferase.